The sequence spans 615 residues: (+)-alpha-pinene synthase TPS2, chloroplastic (615 aa).

The transit peptide at 1–55 (MHCMAVRHFAPSSSLSIFSSTNINNHFFGREIFTPKTSNITTKKSRSRPNCNPIQ) directs the protein to the chloroplast. R330, D367, D371, R509, and D512 together coordinate (2E)-geranyl diphosphate. Mg(2+) is bound by residues D367 and D371. Positions 367–371 (DDIYD) match the DDXXD motif motif. Positions 512, 516, and 520 each coordinate Mg(2+).

Belongs to the terpene synthase family. Tpsb subfamily. It depends on Mg(2+) as a cofactor. Mn(2+) serves as cofactor. Requires K(+) as cofactor. In terms of tissue distribution, trichome.

It localises to the plastid. Its subcellular location is the chloroplast. The catalysed reaction is (2E)-geranyl diphosphate = (1R,5R)-alpha-pinene + diphosphate. It catalyses the reaction (2E)-geranyl diphosphate = (1R,5R)-beta-pinene + diphosphate. It carries out the reaction (2E)-geranyl diphosphate = (4S)-limonene + diphosphate. The enzyme catalyses (2E)-geranyl diphosphate = beta-myrcene + diphosphate. Its pathway is secondary metabolite biosynthesis; terpenoid biosynthesis. The protein operates within terpene metabolism; (-)-alpha-pinene biosynthesis; (-)-alpha-pinene from geranyl diphosphate: step 1/1. Functionally, involved in monoterpene (C10) olefins biosynthesis, constituants of cannabinoids and terpenoids-rich resins. Catalyzes mainly the conversion of (2E)-geranyl diphosphate to (+)-alpha-pinene, and also produces minor products such as (-)-limonene, (+)-beta-pinene and beta-myrcene. This is (+)-alpha-pinene synthase TPS2, chloroplastic from Cannabis sativa (Hemp).